Here is a 124-residue protein sequence, read N- to C-terminus: Putative iron-sulfur cluster insertion protein ErpA (124 aa).

Iron-sulfur cluster is bound by residues Cys-52, Cys-116, and Cys-118.

It belongs to the HesB/IscA family. Homodimer. The cofactor is iron-sulfur cluster.

Its function is as follows. Required for insertion of 4Fe-4S clusters. The sequence is that of Putative iron-sulfur cluster insertion protein ErpA from Ralstonia nicotianae (strain ATCC BAA-1114 / GMI1000) (Ralstonia solanacearum).